The chain runs to 115 residues: T cell receptor beta variable 7-4 (115 aa).

Residues 1-21 (MGTRLLCWVVLGFLGTDHTGA) form the signal peptide. The Ig-like domain occupies 22–115 (GVSQSPRYKV…SAVYLCASSL (94 aa)). Cys-42 and Cys-111 are joined by a disulfide. Residues 67–97 (YSQSDAQRDKSGRPSGRFSAERPERSVSTLK) are disordered.

In terms of assembly, alpha-beta TR is a heterodimer composed of an alpha and beta chain; disulfide-linked. The alpha-beta TR is associated with the transmembrane signaling CD3 coreceptor proteins to form the TR-CD3 (TcR or TCR). The assembly of alpha-beta TR heterodimers with CD3 occurs in the endoplasmic reticulum where a single alpha-beta TR heterodimer associates with one CD3D-CD3E heterodimer, one CD3G-CD3E heterodimer and one CD247 homodimer forming a stable octameric structure. CD3D-CD3E and CD3G-CD3E heterodimers preferentially associate with TR alpha and TR beta chains, respectively. The association of the CD247 homodimer is the last step of TcR assembly in the endoplasmic reticulum and is required for transport to the cell surface.

The protein localises to the cell membrane. In terms of biological role, v region of the variable domain of T cell receptor (TR) beta chain that participates in the antigen recognition. Alpha-beta T cell receptors are antigen specific receptors which are essential to the immune response and are present on the cell surface of T lymphocytes. Recognize peptide-major histocompatibility (MH) (pMH) complexes that are displayed by antigen presenting cells (APC), a prerequisite for efficient T cell adaptive immunity against pathogens. Binding of alpha-beta TR to pMH complex initiates TR-CD3 clustering on the cell surface and intracellular activation of LCK that phosphorylates the ITAM motifs of CD3G, CD3D, CD3E and CD247 enabling the recruitment of ZAP70. In turn ZAP70 phosphorylates LAT, which recruits numerous signaling molecules to form the LAT signalosome. The LAT signalosome propagates signal branching to three major signaling pathways, the calcium, the mitogen-activated protein kinase (MAPK) kinase and the nuclear factor NF-kappa-B (NF-kB) pathways, leading to the mobilization of transcription factors that are critical for gene expression and essential for T cell growth and differentiation. The T cell repertoire is generated in the thymus, by V-(D)-J rearrangement. This repertoire is then shaped by intrathymic selection events to generate a peripheral T cell pool of self-MH restricted, non-autoaggressive T cells. Post-thymic interaction of alpha-beta TR with the pMH complexes shapes TR structural and functional avidity. The protein is T cell receptor beta variable 7-4 of Homo sapiens (Human).